The chain runs to 145 residues: Arginine repressor (145 aa).

This sequence belongs to the ArgR family.

It is found in the cytoplasm. It participates in amino-acid biosynthesis; L-arginine biosynthesis [regulation]. In terms of biological role, regulates arginine biosynthesis genes. The polypeptide is Arginine repressor (Streptococcus pyogenes serotype M3 (strain ATCC BAA-595 / MGAS315)).